Here is a 316-residue protein sequence, read N- to C-terminus: MKVNGIHHVSALTADAQKNLDFYKKVLGLKLVKKSVNQDEPTMYHLFYGDEVANPGTELTFFEIPRIAPFHAGTNSISSIGLRVPGTEALHYWKERFEEQQVTHSGISKRAGRDILAFQDHEGQRLVLTADEEGKGYGLPVKQSGIPEEFSFRGLGPVELTVPYAEPTLHVLTNILGFTEISREPVEGQGTAVILESGEGGAATEIHLIERNDLPRERQGKGSVHHVAFRVRDEEELAGWHRIISREGFSNSGIVERYYFKALYFREPNGILFELSTDGPGFMVDENLDELGQTIALPPYLEHRRAEIEAKLKPIQ.

2 consecutive VOC domains span residues 5-131 and 154-278; these read GIHH…LTAD and GLGP…LSTD. H8, H226, and E274 together coordinate Fe cation.

This sequence belongs to the extradiol ring-cleavage dioxygenase family. The cofactor is Fe(2+).

The protein resides in the cytoplasm. Putative ring-cleavage dioxygenase that may contribute to the degradation of aromatic compounds. In Bacillus subtilis (strain 168), this protein is Putative ring-cleaving dioxygenase MhqA (mhqA).